The sequence spans 969 residues: Glycine dehydrogenase (decarboxylating) (969 aa).

Lys716 is subject to N6-(pyridoxal phosphate)lysine.

Belongs to the GcvP family. As to quaternary structure, the glycine cleavage system is composed of four proteins: P, T, L and H. The cofactor is pyridoxal 5'-phosphate.

The enzyme catalyses N(6)-[(R)-lipoyl]-L-lysyl-[glycine-cleavage complex H protein] + glycine + H(+) = N(6)-[(R)-S(8)-aminomethyldihydrolipoyl]-L-lysyl-[glycine-cleavage complex H protein] + CO2. In terms of biological role, the glycine cleavage system catalyzes the degradation of glycine. The P protein binds the alpha-amino group of glycine through its pyridoxal phosphate cofactor; CO(2) is released and the remaining methylamine moiety is then transferred to the lipoamide cofactor of the H protein. The sequence is that of Glycine dehydrogenase (decarboxylating) from Shewanella woodyi (strain ATCC 51908 / MS32).